We begin with the raw amino-acid sequence, 160 residues long: C-type lectin mosGCTL-1 (160 aa).

The N-terminal stretch at 1–20 is a signal peptide; it reads MLTKGITLILLLVLVHSSHG. The region spanning 23-140 is the C-type lectin domain; it reads TPNRKFYIPS…YHWSWNDNTC (118 aa). 2 disulfides stabilise this stretch: Cys-44-Cys-140 and Cys-120-Cys-140. N-linked (GlcNAc...) asparagine glycosylation occurs at Asn-76.

Interacts with putative receptor-type tyrosine-protein phosphatase mosPTP-1; the interaction probably mediates the recruitment of West Nile virus particles in complex with C-type lectin mosGCTL-1 to the cell surface. In terms of assembly, (Microbial infection) Interacts with envelope protein E and virions of West Nile virus in a calcium-dependent manner. Female salivary gland (at protein level).

It localises to the secreted. In terms of biological role, putative lectin. Its function is as follows. (Microbial infection) Facilitates West Nile virus infection in mosquitoes probably via capturing viral particles and presenting them to a ligand on the cell surface, thereby facilitating viral entry. This Aedes aegypti (Yellowfever mosquito) protein is C-type lectin mosGCTL-1.